Consider the following 152-residue polypeptide: Deoxyuridine 5'-triphosphate nucleotidohydrolase (152 aa).

Substrate is bound by residues 71–73 (RSG), Asn84, 88–90 (LID), and Met98.

It belongs to the dUTPase family. Requires Mg(2+) as cofactor.

The enzyme catalyses dUTP + H2O = dUMP + diphosphate + H(+). Its pathway is pyrimidine metabolism; dUMP biosynthesis; dUMP from dCTP (dUTP route): step 2/2. In terms of biological role, this enzyme is involved in nucleotide metabolism: it produces dUMP, the immediate precursor of thymidine nucleotides and it decreases the intracellular concentration of dUTP so that uracil cannot be incorporated into DNA. The sequence is that of Deoxyuridine 5'-triphosphate nucleotidohydrolase from Shewanella putrefaciens (strain CN-32 / ATCC BAA-453).